Here is a 215-residue protein sequence, read N- to C-terminus: Intraflagellar transport protein 43 homolog B (215 aa).

The segment at M1–I107 is disordered.

This sequence belongs to the IFT43 family. Component of IFT complex A.

Component of IFT complex A (IFT-A) involved in retrograde ciliary transport along microtubules from the ciliary tip to the base. The sequence is that of Intraflagellar transport protein 43 homolog B (ift43b) from Salmo salar (Atlantic salmon).